The chain runs to 103 residues: Histone H4 (103 aa).

Positions methionine 1 to glycine 14 are enriched in gly residues. Residues methionine 1–arginine 20 form a disordered region. The residue at position 2 (serine 2) is an N-acetylserine. N6-acetyl-N6-methyllysine; alternate is present on residues lysine 6 and lysine 13. The DNA-binding element occupies lysine 17–lysine 21. Lysine 21 bears the N6-methyllysine mark.

This sequence belongs to the histone H4 family. The nucleosome is a histone octamer containing two molecules each of H2A, H2B, H3 and H4 assembled in one H3-H4 heterotetramer and two H2A-H2B heterodimers. The octamer wraps approximately 147 bp of DNA.

The protein resides in the nucleus. Its subcellular location is the chromosome. Functionally, core component of nucleosome. Nucleosomes wrap and compact DNA into chromatin, limiting DNA accessibility to the cellular machineries which require DNA as a template. Histones thereby play a central role in transcription regulation, DNA repair, DNA replication and chromosomal stability. DNA accessibility is regulated via a complex set of post-translational modifications of histones, also called histone code, and nucleosome remodeling. This chain is Histone H4, found in Solaster stimpsoni (Striped sun sea star).